We begin with the raw amino-acid sequence, 312 residues long: Beta-ketoacyl-[acyl-carrier-protein] synthase III (312 aa).

Residues Cys-112 and His-237 contribute to the active site. Residues 238–242 (QANIR) form an ACP-binding region. The active site involves Asn-267.

It belongs to the thiolase-like superfamily. FabH family. As to quaternary structure, homodimer.

It localises to the cytoplasm. The enzyme catalyses malonyl-[ACP] + acetyl-CoA + H(+) = 3-oxobutanoyl-[ACP] + CO2 + CoA. It functions in the pathway lipid metabolism; fatty acid biosynthesis. Catalyzes the condensation reaction of fatty acid synthesis by the addition to an acyl acceptor of two carbons from malonyl-ACP. Catalyzes the first condensation reaction which initiates fatty acid synthesis and may therefore play a role in governing the total rate of fatty acid production. Possesses both acetoacetyl-ACP synthase and acetyl transacylase activities. Its substrate specificity determines the biosynthesis of branched-chain and/or straight-chain of fatty acids. The sequence is that of Beta-ketoacyl-[acyl-carrier-protein] synthase III from Bacillus pumilus (strain SAFR-032).